Consider the following 512-residue polypeptide: Histidine ammonia-lyase (512 aa).

A cross-link (5-imidazolinone (Cys-Gly)) is located at residues 143–145; that stretch reads CSG. Serine 144 is subject to 2,3-didehydroalanine (Ser).

It belongs to the PAL/histidase family. Post-translationally, contains an active site 4-methylidene-imidazol-5-one (MIO), which is formed autocatalytically by cyclization and dehydration of residues Cys-Ser-Gly.

It is found in the cytoplasm. It catalyses the reaction L-histidine = trans-urocanate + NH4(+). It participates in amino-acid degradation; L-histidine degradation into L-glutamate; N-formimidoyl-L-glutamate from L-histidine: step 1/3. This chain is Histidine ammonia-lyase, found in Streptomyces avermitilis (strain ATCC 31267 / DSM 46492 / JCM 5070 / NBRC 14893 / NCIMB 12804 / NRRL 8165 / MA-4680).